Here is a 321-residue protein sequence, read N- to C-terminus: Olfactory receptor 5K3 (321 aa).

Residues 1 to 25 are Extracellular-facing; the sequence is MNKENHSLIAEFILTGFTYHPKLKT. The N-linked (GlcNAc...) asparagine glycan is linked to Asn5. A helical transmembrane segment spans residues 26–46; sequence VLFVVFFAIYLITMVGNIGLV. The Cytoplasmic segment spans residues 47-56; it reads ALIYIEQRLH. The chain crosses the membrane as a helical span at residues 57-77; sequence TPMYIFLGNLVLMDSCCSSAI. At 78–97 the chain is on the extracellular side; sequence TPKMLENFFSEDKRITLYEC. A disulfide bridge connects residues Cys97 and Cys179. Residues 98–118 form a helical membrane-spanning segment; it reads MAQFYFLCLAETTDCFLLAAM. Topologically, residues 119–143 are cytoplasmic; it reads AYDCYVAICNPLQYHTMMSKTLCIQ. Residues 144-164 form a helical membrane-spanning segment; it reads MTAGAYLAGNLHPMIEVEFLL. Residues 165 to 196 lie on the Extracellular side of the membrane; sequence RLTFCGSHQINHFFCDVLPLYRLSCINPYINE. A helical membrane pass occupies residues 197–217; that stretch reads LVLFILAGSIQIFTIVLVSYF. The Cytoplasmic segment spans residues 218–235; that stretch reads YILFTIFTMKSKEGRGKA. Residues 236–256 form a helical membrane-spanning segment; the sequence is LSTCASHFLSVSIFCDSLLFM. Over 257–269 the chain is Extracellular; it reads YARPGAVNEGDKD. The helical transmembrane segment at 270–290 threads the bilayer; the sequence is IPVAIFYTLVIPLLNPFIYSL. The Cytoplasmic portion of the chain corresponds to 291–321; it reads RNKEVINIMKKIMKKRKFCHILKQMSSPLAT.

Belongs to the G-protein coupled receptor 1 family.

The protein resides in the cell membrane. Its function is as follows. Odorant receptor. This chain is Olfactory receptor 5K3 (OR5K3), found in Homo sapiens (Human).